The sequence spans 399 residues: Acetate kinase (399 aa).

Asn-7 is a binding site for Mg(2+). Lys-14 is a binding site for ATP. Arg-90 contacts substrate. Asp-147 functions as the Proton donor/acceptor in the catalytic mechanism. Residues 207 to 211, 282 to 284, and 330 to 334 each bind ATP; these read HLGNG, DFR, and GIGEN. Glu-385 provides a ligand contact to Mg(2+).

This sequence belongs to the acetokinase family. Homodimer. It depends on Mg(2+) as a cofactor. The cofactor is Mn(2+).

Its subcellular location is the cytoplasm. The catalysed reaction is acetate + ATP = acetyl phosphate + ADP. It functions in the pathway metabolic intermediate biosynthesis; acetyl-CoA biosynthesis; acetyl-CoA from acetate: step 1/2. In terms of biological role, catalyzes the formation of acetyl phosphate from acetate and ATP. Can also catalyze the reverse reaction. This is Acetate kinase from Caldicellulosiruptor bescii (strain ATCC BAA-1888 / DSM 6725 / KCTC 15123 / Z-1320) (Anaerocellum thermophilum).